Here is a 217-residue protein sequence, read N- to C-terminus: Transcriptional regulatory protein CutR (217 aa).

In terms of domain architecture, Response regulatory spans 2-116; the sequence is RVLVVEDEQL…ELIARVRALG (115 aa). 4-aspartylphosphate is present on Asp51. Positions 124-217 form a DNA-binding region, ompR/PhoB-type; sequence PPVLERAGIK…VTVPGSGYRI (94 aa).

Member of the two-component regulatory system CutS/CutR, involved in the regulation of copper metabolism. CutR suppresses a defective melC1 gene, encoding a putative copper-transfer gene, probably by altering copper metabolism. This chain is Transcriptional regulatory protein CutR (cutR), found in Streptomyces lividans.